The sequence spans 286 residues: Polyamine aminopropyltransferase (286 aa).

The PABS domain occupies 5-238 (KTWHEKLYCH…GVMVFAWGTN (234 aa)). Residues His-64 and Asp-88 each coordinate spermidine. S-methyl-5'-thioadenosine contacts are provided by residues Glu-108 and 140–141 (DG). Asp-158 acts as the Proton acceptor in catalysis. 158-161 (DSTD) is a binding site for spermidine.

This sequence belongs to the spermidine/spermine synthase family. As to quaternary structure, homodimer or homotetramer.

The protein resides in the cytoplasm. It carries out the reaction S-adenosyl 3-(methylsulfanyl)propylamine + putrescine = S-methyl-5'-thioadenosine + spermidine + H(+). Its pathway is amine and polyamine biosynthesis; spermidine biosynthesis; spermidine from putrescine: step 1/1. In terms of biological role, catalyzes the irreversible transfer of a propylamine group from the amino donor S-adenosylmethioninamine (decarboxy-AdoMet) to putrescine (1,4-diaminobutane) to yield spermidine. In Buchnera aphidicola subsp. Acyrthosiphon pisum (strain 5A), this protein is Polyamine aminopropyltransferase.